Consider the following 36-residue polypeptide: MITAAVGALKERGGSSRQAILKYIQANFKVQANPAA.

The 36-residue stretch at 1-36 (MITAAVGALKERGGSSRQAILKYIQANFKVQANPAA) folds into the H15 domain.

It belongs to the histone H1/H5 family. As to expression, sperm.

It is found in the nucleus. The protein localises to the chromosome. The protein is Histone H1-like protein EM5 of Ensis minor (Razor shell).